We begin with the raw amino-acid sequence, 702 residues long: Ribosomal RNA large subunit methyltransferase K/L (702 aa).

The 112-residue stretch at 43–154 (LVYQSLMWSR…KETASIALDL (112 aa)) folds into the THUMP domain.

This sequence belongs to the methyltransferase superfamily. RlmKL family.

The protein localises to the cytoplasm. It catalyses the reaction guanosine(2445) in 23S rRNA + S-adenosyl-L-methionine = N(2)-methylguanosine(2445) in 23S rRNA + S-adenosyl-L-homocysteine + H(+). The catalysed reaction is guanosine(2069) in 23S rRNA + S-adenosyl-L-methionine = N(2)-methylguanosine(2069) in 23S rRNA + S-adenosyl-L-homocysteine + H(+). Specifically methylates the guanine in position 2445 (m2G2445) and the guanine in position 2069 (m7G2069) of 23S rRNA. The protein is Ribosomal RNA large subunit methyltransferase K/L of Escherichia coli O6:H1 (strain CFT073 / ATCC 700928 / UPEC).